A 106-amino-acid chain; its full sequence is A-type ATP synthase subunit F (106 aa).

The protein belongs to the V-ATPase F subunit family. In terms of assembly, has multiple subunits with at least A(3), B(3), C, D, E, F, H, I and proteolipid K(x).

The protein localises to the cell membrane. Its function is as follows. Component of the A-type ATP synthase that produces ATP from ADP in the presence of a proton gradient across the membrane. The chain is A-type ATP synthase subunit F from Methanosphaera stadtmanae (strain ATCC 43021 / DSM 3091 / JCM 11832 / MCB-3).